The primary structure comprises 339 residues: Coproporphyrin III ferrochelatase (339 aa).

2 residues coordinate Fe-coproporphyrin III: S52 and Y121. Fe(2+) is bound by residues H181 and E264.

The protein belongs to the ferrochelatase family.

It is found in the cytoplasm. The enzyme catalyses Fe-coproporphyrin III + 2 H(+) = coproporphyrin III + Fe(2+). It participates in porphyrin-containing compound metabolism; protoheme biosynthesis. Functionally, involved in coproporphyrin-dependent heme b biosynthesis. Catalyzes the insertion of ferrous iron into coproporphyrin III to form Fe-coproporphyrin III. The polypeptide is Coproporphyrin III ferrochelatase (Mycolicibacterium vanbaalenii (strain DSM 7251 / JCM 13017 / BCRC 16820 / KCTC 9966 / NRRL B-24157 / PYR-1) (Mycobacterium vanbaalenii)).